We begin with the raw amino-acid sequence, 618 residues long: MTKKLPSELKQTRKSIQTACEFCHTKHIQCDVGRPCQNCLKRNIGKFCRDKKRKSRKRIEKHGTQPYLNLGKRLVIHDVPSKTVSPSSVHLQRDFLSSDQEKPGKTPAHNTNIQYTYNINDNFQSAGSIPRITNFNTDNGQTVLENTSNNISASQAVHLMNDPIIPTVRKSTLNLKSHFLEQHKAMQQPLATNCLVATSNVPVHSGMDTSNKSDDDVDDETNIHFDSMWCNDEYMKLKDIVDISTPFLPNNSQIFSLQESEYPNPSASTRGNSSLHLTNLLNSTKSVNDQKDSSIGHSTSTFNTYDEVVSRPFISLDMLHLNRGANANTHPSHNAKLESECDSSSHSDADLEKHDTDFISPSKFRELVKTPQDLYDNKCLIKPHNYKLAYTKLLTTLRKKFLEGAEIDKSVSVKDEHSTQKHNLRYDLEVIIRSILERYAPIFISLTSNMIEEDLLLQEVTLQRALLDLENMAKLVSCTPMCIWRRSGEICFVSNEFYSLTGFNKNLLLDRTSFIFEYLDHKSVSNYFQIFNELLAFGYNDINKRKKLLMLNACSSTSSKITEGFSFTTDGKAIFTKCNLLLSNGLYLKCACCWTVKRDSFNIPILVMGQFLPIFEMD.

The zn(2)-C6 fungal-type DNA-binding region spans 20-48; sequence CEFCHTKHIQCDVGRPCQNCLKRNIGKFC. The interval 325–352 is disordered; sequence ANANTHPSHNAKLESECDSSSHSDADLE. The segment covering 335–352 has biased composition (basic and acidic residues); the sequence is AKLESECDSSSHSDADLE. Residues 466–538 enclose the PAS domain; that stretch reads LLDLENMAKL…QIFNELLAFG (73 aa).

Belongs to the ERT1/acuK family.

The protein localises to the nucleus. Functionally, transcription factor which regulates nonfermentable carbon utilization. Binds specifically to 5'-CGGN(8)CGG-3' and 5'-CGGN(9)CGG-3' sequences in the promoter region. The sequence is that of Glucose starvation modulator protein 1 (GSM1) from Saccharomyces cerevisiae (strain YJM789) (Baker's yeast).